A 318-amino-acid polypeptide reads, in one-letter code: MDQDAFILKEDSEVEREAPGGRESLSDVIGFLDAVLSSEPTDIGGDRSWLHNTINTPQGPGSAHRAKSEGEGEVSTPSTQDNRSGEESRVSGRTSKPEAEAHAGNLDKQNIHRAFGGRTGTNSVSQDLGDGGDSGILENPPNERGYPRSGIEDENREMAAHPDKRGEDQAEGLPEEVRGGTSLPDEGEGGASNNGRSMEPGSSHSARVTGVLVIPSPELEEAVLRRNKRRPTNSGSKPLTPATVPGTRSPPLNRYNSTGSPPGKPPSTQDEHINSGDTPAVRVKDRKPPIGTRSVSDCPANGRPIHPGLESDSTKKGA.

Disordered stretches follow at residues 1–23 (MDQD…GGRE) and 38–318 (SEPT…KKGA). The span at 7–20 (ILKEDSEVEREAPG) shows a compositional bias: basic and acidic residues. Over residues 50–59 (LHNTINTPQG) the composition is skewed to polar residues. A Phosphoserine; by host modification is found at S68. A compositionally biased stretch (basic and acidic residues) spans 83–101 (RSGEESRVSGRTSKPEAEA). Phosphoserine; by host is present on S125. The segment covering 150-168 (GIEDENREMAAHPDKRGED) has biased composition (basic and acidic residues). Residues 191 to 206 (ASNNGRSMEPGSSHSA) are compositionally biased toward polar residues. Phosphoserine; by host occurs at positions 192, 249, 257, and 260.

The sequence is that of Protein W (P/V/C) from Sendai virus (strain Harris) (SeV).